A 184-amino-acid chain; its full sequence is Photosystem I assembly protein Ycf4 (184 aa).

2 consecutive transmembrane segments (helical) span residues 22-42 (VCWA…GTSS) and 57-77 (IIFF…LFIS).

This sequence belongs to the Ycf4 family.

The protein resides in the plastid. The protein localises to the chloroplast thylakoid membrane. In terms of biological role, seems to be required for the assembly of the photosystem I complex. This Morus indica (Mulberry) protein is Photosystem I assembly protein Ycf4.